Consider the following 385-residue polypeptide: Flap endonuclease 1 (385 aa).

The N-domain stretch occupies residues 1 to 104; it reads MGILGLSKLI…GELAKRAERR (104 aa). Residue aspartate 34 coordinates Mg(2+). 2 residues coordinate DNA: arginine 47 and arginine 70. Aspartate 86, glutamate 158, glutamate 160, aspartate 179, and aspartate 181 together coordinate Mg(2+). The segment at 122 to 253 is I-domain; that stretch reads GIEKFNRRLV…KRAIELINTY (132 aa). Glutamate 158 serves as a coordination point for DNA. 2 residues coordinate DNA: glycine 231 and aspartate 233. A Mg(2+)-binding site is contributed by aspartate 233. The tract at residues 336–344 is interaction with PCNA; the sequence is TQVRLDSFF. The segment at 346-385 is disordered; sequence TLPSTPNATNAAKRKAEEAKKSANNKKAKTSGGGRGRRPK. Positions 368 to 385 are enriched in basic residues; the sequence is ANNKKAKTSGGGRGRRPK.

Belongs to the XPG/RAD2 endonuclease family. FEN1 subfamily. Interacts with PCNA. Three molecules of FEN1 bind to one PCNA trimer with each molecule binding to one PCNA monomer. PCNA stimulates the nuclease activity without altering cleavage specificity. It depends on Mg(2+) as a cofactor. Phosphorylated. Phosphorylation upon DNA damage induces relocalization to the nuclear plasma.

It is found in the nucleus. The protein localises to the nucleolus. It localises to the nucleoplasm. The protein resides in the mitochondrion. Structure-specific nuclease with 5'-flap endonuclease and 5'-3' exonuclease activities involved in DNA replication and repair. During DNA replication, cleaves the 5'-overhanging flap structure that is generated by displacement synthesis when DNA polymerase encounters the 5'-end of a downstream Okazaki fragment. It enters the flap from the 5'-end and then tracks to cleave the flap base, leaving a nick for ligation. Also involved in the long patch base excision repair (LP-BER) pathway, by cleaving within the apurinic/apyrimidinic (AP) site-terminated flap. Acts as a genome stabilization factor that prevents flaps from equilibrating into structures that lead to duplications and deletions. Also possesses 5'-3' exonuclease activity on nicked or gapped double-stranded DNA, and exhibits RNase H activity. Also involved in replication and repair of rDNA and in repairing mitochondrial DNA. The sequence is that of Flap endonuclease 1 from Drosophila simulans (Fruit fly).